Reading from the N-terminus, the 147-residue chain is Hemoglobin subunit epsilon-1 (147 aa).

Residues 3–147 (HFTAEEKAAI…VATALAHKYH (145 aa)) enclose the Globin domain. Residues histidine 64 and histidine 93 each contribute to the heme b site.

This sequence belongs to the globin family. As to quaternary structure, heterotetramer of two epsilon chains and two alpha chains. Red blood cells.

Its function is as follows. Beta-type chain found in early embryos. This is Hemoglobin subunit epsilon-1 (HBE1) from Capra hircus (Goat).